We begin with the raw amino-acid sequence, 420 residues long: MDKLKIEASGALAGNVVISGAKNAALPILMAGVLAETDFNVSNVPNLRDVNTSCELLRCLGAEVTRSGTDKVCISTTNLNEFCAPYELVKTMRASILILGPLLARYGTADVSLPGGCAIGARPVNLHLQGLEQMGAKIEVKEGYIKARVDGRLKGAHIFMDMISVGATENLLMAAALADGETIIENAAREPEVVDLANCLIAMGAKIEGAGTDTVRIQGVESLQGCDYQVMPDRIETGSFLVAAAVTRGKIRCTKADPKTLESVLAKLEDAGASITTGDDWIELDMQGKRPKAVNIKTVAYPGFPTDMQAQFCVLNALAEGTATITETIFENRFMHVPELSRMGATMELEGNTCIIHGIEKLNGAQVMATDLRASASLVIAGLVAEGTTIVDRIYHLDRGYEHIEDKFKGLGGHVERVKS.

22 to 23 serves as a coordination point for phosphoenolpyruvate; sequence KN. Arginine 93 is a binding site for UDP-N-acetyl-alpha-D-glucosamine. The Proton donor role is filled by cysteine 117. Cysteine 117 is modified (2-(S-cysteinyl)pyruvic acid O-phosphothioketal). Positions 307 and 329 each coordinate UDP-N-acetyl-alpha-D-glucosamine.

This sequence belongs to the EPSP synthase family. MurA subfamily.

The protein resides in the cytoplasm. The catalysed reaction is phosphoenolpyruvate + UDP-N-acetyl-alpha-D-glucosamine = UDP-N-acetyl-3-O-(1-carboxyvinyl)-alpha-D-glucosamine + phosphate. The protein operates within cell wall biogenesis; peptidoglycan biosynthesis. Functionally, cell wall formation. Adds enolpyruvyl to UDP-N-acetylglucosamine. This is UDP-N-acetylglucosamine 1-carboxyvinyltransferase from Shewanella halifaxensis (strain HAW-EB4).